A 499-amino-acid polypeptide reads, in one-letter code: UDP-N-acetylmuramoylalanine--D-glutamate ligase (499 aa).

Residue 120-126 (GTNGKTT) coordinates ATP.

The protein belongs to the MurCDEF family.

The protein resides in the cytoplasm. The enzyme catalyses UDP-N-acetyl-alpha-D-muramoyl-L-alanine + D-glutamate + ATP = UDP-N-acetyl-alpha-D-muramoyl-L-alanyl-D-glutamate + ADP + phosphate + H(+). Its pathway is cell wall biogenesis; peptidoglycan biosynthesis. In terms of biological role, cell wall formation. Catalyzes the addition of glutamate to the nucleotide precursor UDP-N-acetylmuramoyl-L-alanine (UMA). The polypeptide is UDP-N-acetylmuramoylalanine--D-glutamate ligase (Nostoc punctiforme (strain ATCC 29133 / PCC 73102)).